We begin with the raw amino-acid sequence, 436 residues long: Trigger factor (436 aa).

Residues 163–248 (GDRVVLDFAG…VKEVAEGVLP (86 aa)) enclose the PPIase FKBP-type domain.

It belongs to the FKBP-type PPIase family. Tig subfamily.

The protein resides in the cytoplasm. It catalyses the reaction [protein]-peptidylproline (omega=180) = [protein]-peptidylproline (omega=0). In terms of biological role, involved in protein export. Acts as a chaperone by maintaining the newly synthesized protein in an open conformation. Functions as a peptidyl-prolyl cis-trans isomerase. This is Trigger factor from Bordetella bronchiseptica (strain ATCC BAA-588 / NCTC 13252 / RB50) (Alcaligenes bronchisepticus).